The following is a 465-amino-acid chain: 3-isopropylmalate dehydratase large subunit (465 aa).

3 residues coordinate [4Fe-4S] cluster: C347, C407, and C410. The disordered stretch occupies residues 416 to 443 (DTLRPGERSASTSNRNFEGRQGPGGRTH).

The protein belongs to the aconitase/IPM isomerase family. LeuC type 1 subfamily. As to quaternary structure, heterodimer of LeuC and LeuD. [4Fe-4S] cluster serves as cofactor.

The enzyme catalyses (2R,3S)-3-isopropylmalate = (2S)-2-isopropylmalate. It participates in amino-acid biosynthesis; L-leucine biosynthesis; L-leucine from 3-methyl-2-oxobutanoate: step 2/4. Catalyzes the isomerization between 2-isopropylmalate and 3-isopropylmalate, via the formation of 2-isopropylmaleate. This is 3-isopropylmalate dehydratase large subunit from Frankia casuarinae (strain DSM 45818 / CECT 9043 / HFP020203 / CcI3).